We begin with the raw amino-acid sequence, 249 residues long: Fasciclin-like arabinogalactan protein 12 (249 aa).

The N-terminal stretch at 1–24 is a signal peptide; sequence MEHSLIILLFTVLLLLTTTPGILS. In terms of domain architecture, FAS1 spans 37–181; that stretch reads PTNVTKILEK…LAVYQVDKVL (145 aa). Residues Asn39, Asn71, Asn143, Asn152, and Asn159 are each glycosylated (N-linked (GlcNAc...) asparagine). Positions 186–219 are disordered; the sequence is VFDPRPPAPAPAPSVSKSKKKKDDSDSSSDDSPA. A lipid anchor (GPI-anchor amidated aspartate) is attached at Asp220. Positions 221-249 are cleaved as a propeptide — removed in mature form; the sequence is ASFALRNVGSVCDAVSFCVMSVMLAWFYL.

The protein belongs to the fasciclin-like AGP family.

It localises to the cell membrane. Its function is as follows. May be a cell surface adhesion protein. This is Fasciclin-like arabinogalactan protein 12 (FLA12) from Arabidopsis thaliana (Mouse-ear cress).